Here is a 628-residue protein sequence, read N- to C-terminus: Kinesin-like protein tea2 (628 aa).

Residues 2–122 form an interaction with mal3 region; sequence SSSSSKPVNT…TTSQQTNSKG (121 aa). The residue at position 82 (Ser82) is a Phosphoserine. The Kinesin motor domain occupies 132-460; sequence GIITSIRIRP…LKFASRAQNL (329 aa). ATP is bound at residue 218–225; that stretch reads GMTGTGKT. Positions 530 to 557 form a coiled coil; that stretch reads LRMEELLSDHNFEIADLRDELQDKEQII. The disordered stretch occupies residues 588–628; sequence VTRGSRSSSDQFSNETKTEILPDDQQQSKKDSVTQETQLLS. Polar residues predominate over residues 589–602; that stretch reads TRGSRSSSDQFSNE. Residues 603–620 are compositionally biased toward basic and acidic residues; the sequence is TKTEILPDDQQQSKKDSV.

This sequence belongs to the TRAFAC class myosin-kinesin ATPase superfamily. Kinesin family. In terms of assembly, interacts with mal3 and tip1.

It is found in the cytoplasm. It localises to the cytoskeleton. Its function is as follows. Promotes microtubule growth, possibly through interactions with the microtubule end, and is important for establishing and maintaining polarized growth along the long axis of the cell. Acts as a kinesin motor protein that moves along microtubules and is required for proper localization of tea1 and tip1 to the cell tips and microtubules, respectively. ATPase activity stimulated via interaction with mal3. This chain is Kinesin-like protein tea2, found in Schizosaccharomyces pombe (strain 972 / ATCC 24843) (Fission yeast).